Consider the following 272-residue polypeptide: Eukaryotic translation initiation factor 4E homolog (272 aa).

The interval 249-272 (GKLNSGRKPSNTRGGFSSFGNKRY) is disordered. Over residues 255-272 (RKPSNTRGGFSSFGNKRY) the composition is skewed to polar residues.

Belongs to the eukaryotic initiation factor 4E family.

In terms of biological role, recognizes and binds the 7-methylguanosine-containing mRNA cap during an early step in the initiation of protein synthesis and facilitates ribosome binding by inducing the unwinding of the mRNAs secondary structures. The chain is Eukaryotic translation initiation factor 4E homolog from Acanthamoeba polyphaga mimivirus (APMV).